The sequence spans 145 residues: MIALIQRVTRASVTVEGEVTGEIGAGLLVLLGVEKDDDEQKANRLCERVLGYRIFSDAEGKMNLNVQQAGGSVLVVSQFTLAADTERGMRPSFSKGASPDRAEALYDYFVERCRQQEMNTQTGRFAADMQVSLVNDGPVTFWLQV.

The Gly-cisPro motif, important for rejection of L-amino acids motif lies at Gly137–Pro138.

It belongs to the DTD family. In terms of assembly, homodimer.

Its subcellular location is the cytoplasm. The catalysed reaction is glycyl-tRNA(Ala) + H2O = tRNA(Ala) + glycine + H(+). It carries out the reaction a D-aminoacyl-tRNA + H2O = a tRNA + a D-alpha-amino acid + H(+). Functionally, an aminoacyl-tRNA editing enzyme that deacylates mischarged D-aminoacyl-tRNAs. Also deacylates mischarged glycyl-tRNA(Ala), protecting cells against glycine mischarging by AlaRS. Acts via tRNA-based rather than protein-based catalysis; rejects L-amino acids rather than detecting D-amino acids in the active site. By recycling D-aminoacyl-tRNA to D-amino acids and free tRNA molecules, this enzyme counteracts the toxicity associated with the formation of D-aminoacyl-tRNA entities in vivo and helps enforce protein L-homochirality. The sequence is that of D-aminoacyl-tRNA deacylase from Escherichia coli O139:H28 (strain E24377A / ETEC).